A 901-amino-acid chain; its full sequence is HTH-type transcriptional regulator MalT (901 aa).

39–46 (SPAGYGKT) contacts ATP. One can recognise an HTH luxR-type domain in the interval 829-894 (ELIRTSPLTQ…AAVQHAQKLL (66 aa)). Residues 853-872 (NEQIAGELEVAATTIKTHIR) constitute a DNA-binding region (H-T-H motif).

This sequence belongs to the MalT family. In terms of assembly, monomer in solution. Oligomerizes to an active state in the presence of the positive effectors ATP and maltotriose.

Its activity is regulated as follows. Activated by ATP and maltotriose, which are both required for DNA binding. In terms of biological role, positively regulates the transcription of the maltose regulon whose gene products are responsible for uptake and catabolism of malto-oligosaccharides. Specifically binds to the promoter region of its target genes, recognizing a short DNA motif called the MalT box. The sequence is that of HTH-type transcriptional regulator MalT from Escherichia coli O6:K15:H31 (strain 536 / UPEC).